Consider the following 233-residue polypeptide: 2,3,4,5-tetrahydropyridine-2,6-dicarboxylate N-acetyltransferase (233 aa).

Belongs to the transferase hexapeptide repeat family. DapH subfamily.

The enzyme catalyses (S)-2,3,4,5-tetrahydrodipicolinate + acetyl-CoA + H2O = L-2-acetamido-6-oxoheptanedioate + CoA. Its pathway is amino-acid biosynthesis; L-lysine biosynthesis via DAP pathway; LL-2,6-diaminopimelate from (S)-tetrahydrodipicolinate (acetylase route): step 1/3. Functionally, catalyzes the transfer of an acetyl group from acetyl-CoA to tetrahydrodipicolinate. This chain is 2,3,4,5-tetrahydropyridine-2,6-dicarboxylate N-acetyltransferase, found in Oenococcus oeni (strain ATCC BAA-331 / PSU-1).